A 752-amino-acid chain; its full sequence is RNA-directed RNA polymerase (752 aa).

Residues 442-561 (PVAIGLDASR…FLEQSDLATF (120 aa)) enclose the RdRp catalytic domain.

It belongs to the tombusviridae RNA polymerase family.

It catalyses the reaction RNA(n) + a ribonucleoside 5'-triphosphate = RNA(n+1) + diphosphate. Functionally, RNA-dependent RNA polymerase that plays an essential role in the virus replication. The sequence is that of RNA-directed RNA polymerase from Oat chlorotic stunt virus (isolate United Kingdom) (OCSV).